The chain runs to 566 residues: MDIKRIILYVIVALLAIALFNAWQRDYPPTPKPTPTVEQPTANGDHPTAYTPPAFTPGAAEKTKKAGTIAFTSKVPEARLITVRTDVLDVEIDTQGGNIVSAKLPKYPVSLEEKQTPVQILSGEPNELYIAQSGLTNGNGQPTTVQFESEKKQYVLENGQNQLIVQLTGRAPDGLLVTKTYTFHRDDYAIHLAYQVKNNTSKPWQGSLYTQITRRQPPTEHHHFYVRSYNGASMGSPQTPYEKLSYESLDKQNIDRTSQSGWIAMQQHYFLSAWVPGNPELTYHYYSHVIPASDEPNVYVVGFVSPQMNVAAGSEAATHATLYVGPEIAKRLKGLAPGLERTIDYGWLWPISMLLFWILSAVHAVVKNWGWSIIITTILIKIVFYWFSAKSFRSMARMREMQPRIQALKERHGDDRQALSRATMELYRKEKINPLGGCLPMLIQVPVFIAFYYVIIESVQLRQAPFIFWIHDLSVKDPYYILPIIMGLSMLAQQWVSPTSPDPTQQKMMWILPVIFTVFFINFPAGLVLYWITNNVVQTLQQWYVNKTYESHKAKLKARRARKRKR.

5 consecutive transmembrane segments (helical) span residues 3–23 (IKRI…FNAW), 346–366 (GWLW…HAVV), 369–389 (WGWS…WFSA), 436–456 (GGCL…YVII), and 509–529 (MWIL…GLVL).

Belongs to the OXA1/ALB3/YidC family. Type 1 subfamily. As to quaternary structure, interacts with the Sec translocase complex via SecD. Specifically interacts with transmembrane segments of nascent integral membrane proteins during membrane integration.

Its subcellular location is the cell inner membrane. In terms of biological role, required for the insertion and/or proper folding and/or complex formation of integral membrane proteins into the membrane. Involved in integration of membrane proteins that insert both dependently and independently of the Sec translocase complex, as well as at least some lipoproteins. Aids folding of multispanning membrane proteins. The protein is Membrane protein insertase YidC of Coxiella burnetii (strain RSA 331 / Henzerling II).